We begin with the raw amino-acid sequence, 358 residues long: Isopentenyl-diphosphate delta-isomerase (358 aa).

12–13 is a binding site for substrate; it reads RK. FMN-binding positions include 69–71, S99, and N128; that span reads AMT. Position 158 (Q158) interacts with substrate. Residue E159 coordinates Mg(2+). Residues K190, T220, 267–269, and 288–289 contribute to the FMN site; these read GIR and AG.

The protein belongs to the IPP isomerase type 2 family. In terms of assembly, homooctamer. Dimer of tetramers. Requires FMN as cofactor. It depends on NADPH as a cofactor. The cofactor is Mg(2+).

It localises to the cytoplasm. The enzyme catalyses isopentenyl diphosphate = dimethylallyl diphosphate. Its function is as follows. Involved in the biosynthesis of isoprenoids. Catalyzes the 1,3-allylic rearrangement of the homoallylic substrate isopentenyl (IPP) to its allylic isomer, dimethylallyl diphosphate (DMAPP). This Listeria monocytogenes serotype 4a (strain HCC23) protein is Isopentenyl-diphosphate delta-isomerase.